We begin with the raw amino-acid sequence, 2424 residues long: Voltage-dependent P/Q-type calcium channel subunit alpha-1A (2424 aa).

The Cytoplasmic portion of the chain corresponds to 1 to 98; it reads MARFGDEMPA…KYAKKITEWP (98 aa). An I repeat occupies 85 to 363; the sequence is NVVRKYAKKI…LVLGVLSGEF (279 aa). A helical transmembrane segment spans residues 99 to 117; that stretch reads PFEYMILATIIANCIVLAL. Over 118–135 the chain is Extracellular; it reads EQHLPDDDKTPMSERLDD. The helical transmembrane segment at 136–155 threads the bilayer; the sequence is TEPYFIGIFCFEAGIKIIAL. Over 156–167 the chain is Cytoplasmic; the sequence is GFAFHKGSYLRN. Residues 168–185 traverse the membrane as a helical segment; it reads GWNVMDFVVVLTGILATV. Residues 186 to 190 lie on the Extracellular side of the membrane; that stretch reads GTEFD. Residues 191-209 form a helical membrane-spanning segment; it reads LRTLRAVRVLRPLKLVSGI. The Cytoplasmic segment spans residues 210 to 228; that stretch reads PSLQVVLKSIMKAMIPLLQ. Residues 229–248 form a helical membrane-spanning segment; it reads IGLLLFFAILIFAIIGLEFY. At 249 to 335 the chain is on the extracellular side; it reads MGKFHTTCFE…NSNDASGNTW (87 aa). An N-linked (GlcNAc...) asparagine glycan is attached at asparagine 283. Glutamate 318 lines the Ca(2+) pocket. Residues 336 to 360 traverse the membrane as a helical segment; that stretch reads NWLYFIPLIIIGSFFMLNLVLGVLS. The Cytoplasmic segment spans residues 361 to 487; that stretch reads GEFAKERERV…FYIRRMVKTQ (127 aa). A binding to the beta subunit region spans residues 383 to 400; sequence QQIERELNGYMEWISKAE. Threonine 409 carries the post-translational modification Phosphothreonine. Residues serine 448 and serine 451 each carry the phosphoserine modification. Residues 473-717 form an II repeat; it reads ERRMRFYIRR…VFLAIAVDNL (245 aa). The helical transmembrane segment at 488 to 506 threads the bilayer; it reads AFYWTVLSLVALNTLCVAI. Topologically, residues 507-521 are extracellular; sequence VHYNQPEWLSDFLYY. The helical transmembrane segment at 522–541 threads the bilayer; sequence AEFIFLGLFMSEMFIKMYGL. The Cytoplasmic portion of the chain corresponds to 542-549; that stretch reads GTRPYFHS. Residues 550 to 568 form a helical membrane-spanning segment; that stretch reads SFNCFDCGVIIGSIFEVIW. Residues 569–578 are Extracellular-facing; it reads AVIKPGTSFG. Residues 579–597 traverse the membrane as a helical segment; the sequence is ISVLRALRLLRIFKVTKYW. At 598 to 616 the chain is on the cytoplasmic side; sequence ASLRNLVVSLLNSMKSIIS. The helical transmembrane segment at 617–636 threads the bilayer; sequence LLFLLFLFIVVFALLGMQLF. Residues 637–689 are Extracellular-facing; the sequence is GGQFNFDEGTPPTNFDTFPAAIMTVFQILTGEDWNEVMYDGIKSQGGVQGGMV. Glutamate 668 lines the Ca(2+) pocket. Residues 690 to 714 form a helical membrane-spanning segment; that stretch reads FSIYFIVLTLFGNYTLLNVFLAIAV. At 715-1253 the chain is on the cytoplasmic side; the sequence is DNLANAQELT…RLCHYILNLR (539 aa). Serine 750, serine 753, and serine 790 each carry phosphoserine. The interval 819 to 1229 is disordered; that stretch reads HLDRPLVVDP…GEDGPKPMPP (411 aa). Composition is skewed to basic and acidic residues over residues 893–912, 922–931, and 969–996; these read ELSR…REGG, EAERGKAGDP, and RPGE…RSGE. The span at 1053 to 1065 shows a compositional bias: polar residues; that stretch reads PNLSTTRPIQQDL. Phosphoserine occurs at positions 1091 and 1104. The segment covering 1110-1140 has biased composition (low complexity); the sequence is SSTDPAGPTPATAANPQNSTASRRTPNNPGN. A compositionally biased stretch (polar residues) spans 1151–1168; sequence ENSLIVTNPSTAQTNSAK. A compositionally biased stretch (basic and acidic residues) spans 1204–1214; the sequence is LPKKEDEKKEE. The III repeat unit spans residues 1240-1523; sequence NPLRRLCHYI…IFVALIIITF (284 aa). The helical transmembrane segment at 1254 to 1272 threads the bilayer; the sequence is YFEMCILMVIAMSSIALAA. At 1273 to 1288 the chain is on the extracellular side; the sequence is EDPVQPNAPRNNVLRY. Residues 1289 to 1308 form a helical membrane-spanning segment; sequence FDYVFTGVFTFEMVIKMIDL. Residues 1309–1320 are Cytoplasmic-facing; that stretch reads GLVLHQGAYFRD. A helical membrane pass occupies residues 1321 to 1339; that stretch reads LWNILDFIVVSGALVAFAF. Residues 1340–1350 lie on the Extracellular side of the membrane; that stretch reads TGNSKGKDINT. A helical membrane pass occupies residues 1351–1369; that stretch reads IKSLRVLRVLRPLKTIKRL. Residues 1370–1388 lie on the Cytoplasmic side of the membrane; sequence PKLKAVFDCVVNSLKNVFN. Residues 1389-1408 form a helical membrane-spanning segment; sequence ILIVYMLFMFIFAVVAVQLF. Residues 1409–1495 are Extracellular-facing; the sequence is KGKFFHCTDE…QGPSPGYRME (87 aa). Glutamate 1469 is a binding site for Ca(2+). A helical membrane pass occupies residues 1496–1520; that stretch reads MSIFYVVYFVVFPFFFVNIFVALII. At 1521–1575 the chain is on the cytoplasmic side; the sequence is ITFQEQGDKMMEEYSLEKNERACIDFAISAKPLTRHMPQNKQSFQYRMWQFVVSP. An IV repeat occupies 1560 to 1823; it reads NKQSFQYRMW…LFVAVIMDNF (264 aa). Residues 1576-1604 traverse the membrane as a helical segment; that stretch reads PFEYTIMAMIALNTIVLMMKFYGASVAYD. Residues 1605-1609 are Extracellular-facing; it reads NALKV. A helical membrane pass occupies residues 1610–1629; sequence FNIVFTSLFSLECLLKVLAF. At 1630-1637 the chain is on the cytoplasmic side; it reads GILNYFRD. A helical transmembrane segment spans residues 1638–1656; that stretch reads AWNIFDFVTVLGSITDILV. Over 1657–1665 the chain is Extracellular; the sequence is TEFGNNFIN. N-linked (GlcNAc...) asparagine glycosylation occurs at asparagine 1665. A helical transmembrane segment spans residues 1666 to 1684; that stretch reads LSFLRLFRAARLIKLLRQG. Residues 1685-1703 lie on the Cytoplasmic side of the membrane; sequence YTIRILLWTFVQSFKALPY. The chain crosses the membrane as a helical span at residues 1704–1723; that stretch reads VCLLIAMLFFIYAIIGMQVF. Over 1724-1795 the chain is Extracellular; sequence GNIGIDMEDE…ILTPECGNEF (72 aa). A helical membrane pass occupies residues 1796–1820; that stretch reads AYFYFVSFIFLCSFLMLNLFVAVIM. At 1821 to 2424 the chain is on the cytoplasmic side; the sequence is DNFEYLTRDS…GGPRASAPSP (604 aa). Residue threonine 1993 is modified to Phosphothreonine. Positions 1997-2424 are disordered; sequence FQRMEPPPDE…GGPRASAPSP (428 aa). Polar residues predominate over residues 2037-2053; that stretch reads SWVTQRAQEMFQKTGTW. Residues serine 2054, serine 2072, serine 2084, serine 2086, serine 2127, and serine 2148 each carry the phosphoserine modification. Over residues 2074 to 2090 the composition is skewed to basic and acidic residues; that stretch reads EMREMSQDGYSDSEHCL. Basic and acidic residues-rich tracts occupy residues 2142–2159 and 2200–2210; these read RRLD…ENQR and PSREREQERGR. A compositionally biased stretch (basic residues) spans 2211 to 2229; the sequence is PKDRKHRPHHHHHHHHHPG. Over residues 2249–2262 the composition is skewed to low complexity; it reads VARVRPARAPALAH. The span at 2280–2305 shows a compositional bias: basic residues; it reads RRARRPRPRQRRRPRRRRGGGGRALR.

The protein belongs to the calcium channel alpha-1 subunit (TC 1.A.1.11) family. CACNA1A subfamily. In terms of assembly, voltage-dependent calcium channels are multisubunit complexes, consisting of alpha-1, alpha-2, beta and delta subunits in a 1:1:1:1 ratio. The channel activity is directed by the pore-forming and voltage-sensitive alpha-1 subunit. In many cases, this subunit is sufficient to generate voltage-sensitive calcium channel activity. The auxiliary subunits beta and alpha-2/delta linked by a disulfide bridge regulate the channel activity. Interacts with CABP1. Interacts with the spider omega-agatoxin-IVA (AC P30288). Interacts with TSPOAP1. In terms of tissue distribution, brain specific. Purkinje cells contain predominantly P-type VSCC, the Q-type being a prominent calcium current in cerebellar granule cells.

Its subcellular location is the cell membrane. The catalysed reaction is Ca(2+)(in) = Ca(2+)(out). Its function is as follows. Voltage-sensitive calcium channels (VSCC) mediate the entry of calcium ions into excitable cells and are also involved in a variety of calcium-dependent processes, including muscle contraction, hormone or neurotransmitter release, gene expression, cell motility, cell division and cell death. The isoform alpha-1A gives rise to P and/or Q-type calcium currents. P/Q-type calcium channels belong to the 'high-voltage activated' (HVA) group and are specifically blocked by the spider omega-agatoxin-IVA (AC P54282). They are however insensitive to dihydropyridines (DHP). The polypeptide is Voltage-dependent P/Q-type calcium channel subunit alpha-1A (CACNA1A) (Oryctolagus cuniculus (Rabbit)).